The following is a 219-amino-acid chain: MIYISPKLVVALPVKELKDLNRIELLINDVDLVELRLDYLSKFDVDILDLFSKYKEKLIITLRDKDEGGVNYIDPAFKANFVRRMEREKFMYDIEARFALRYQVNVKDKIVSIHYFDNLPEFTEVKEIFDKFDEAYLRKIAVIAKRGYRELLMRVLDNYDNAVVMPMGVNGVERIAFSLLGSKLIYAHAGEETAKGQLHYKDVRRILNQLSTIMSSPST.

3-dehydroquinate contacts are provided by residues 34–36 (ELR) and R63. H114 functions as the Proton donor/acceptor in the catalytic mechanism. The active-site Schiff-base intermediate with substrate is the K139. 3 residues coordinate 3-dehydroquinate: R174, T193, and Q197.

This sequence belongs to the type-I 3-dehydroquinase family. Homodimer.

It carries out the reaction 3-dehydroquinate = 3-dehydroshikimate + H2O. The protein operates within metabolic intermediate biosynthesis; chorismate biosynthesis; chorismate from D-erythrose 4-phosphate and phosphoenolpyruvate: step 3/7. In terms of biological role, involved in the third step of the chorismate pathway, which leads to the biosynthesis of aromatic amino acids. Catalyzes the cis-dehydration of 3-dehydroquinate (DHQ) and introduces the first double bond of the aromatic ring to yield 3-dehydroshikimate. The chain is 3-dehydroquinate dehydratase from Sulfolobus acidocaldarius (strain ATCC 33909 / DSM 639 / JCM 8929 / NBRC 15157 / NCIMB 11770).